The sequence spans 177 residues: Large ribosomal subunit protein uL6 (177 aa).

This sequence belongs to the universal ribosomal protein uL6 family. Part of the 50S ribosomal subunit.

Functionally, this protein binds to the 23S rRNA, and is important in its secondary structure. It is located near the subunit interface in the base of the L7/L12 stalk, and near the tRNA binding site of the peptidyltransferase center. The sequence is that of Large ribosomal subunit protein uL6 from Vibrio vulnificus (strain CMCP6).